The primary structure comprises 349 residues: Glycerol-3-phosphate dehydrogenase [NAD(P)+] (349 aa).

4 residues coordinate NADPH: Trp20, Arg43, Arg44, and Lys117. Sn-glycerol 3-phosphate is bound by residues Lys117 and Gly147. Ala151 is an NADPH binding site. Sn-glycerol 3-phosphate is bound by residues Lys202, Asp255, Ser265, Arg266, and Asn267. Lys202 serves as the catalytic Proton acceptor. Residue Arg266 participates in NADPH binding. NADPH is bound by residues Val297 and Glu299.

Belongs to the NAD-dependent glycerol-3-phosphate dehydrogenase family.

Its subcellular location is the cytoplasm. It carries out the reaction sn-glycerol 3-phosphate + NAD(+) = dihydroxyacetone phosphate + NADH + H(+). It catalyses the reaction sn-glycerol 3-phosphate + NADP(+) = dihydroxyacetone phosphate + NADPH + H(+). Its pathway is membrane lipid metabolism; glycerophospholipid metabolism. Its function is as follows. Catalyzes the reduction of the glycolytic intermediate dihydroxyacetone phosphate (DHAP) to sn-glycerol 3-phosphate (G3P), the key precursor for phospholipid synthesis. This chain is Glycerol-3-phosphate dehydrogenase [NAD(P)+], found in Mycobacterium leprae (strain TN).